Consider the following 259-residue polypeptide: Thiazole synthase (259 aa).

K98 functions as the Schiff-base intermediate with DXP in the catalytic mechanism. 1-deoxy-D-xylulose 5-phosphate-binding positions include G159, 185 to 186 (AG), and 207 to 208 (NS).

This sequence belongs to the ThiG family. As to quaternary structure, homotetramer. Forms heterodimers with either ThiH or ThiS.

The protein resides in the cytoplasm. It catalyses the reaction [ThiS sulfur-carrier protein]-C-terminal-Gly-aminoethanethioate + 2-iminoacetate + 1-deoxy-D-xylulose 5-phosphate = [ThiS sulfur-carrier protein]-C-terminal Gly-Gly + 2-[(2R,5Z)-2-carboxy-4-methylthiazol-5(2H)-ylidene]ethyl phosphate + 2 H2O + H(+). Its pathway is cofactor biosynthesis; thiamine diphosphate biosynthesis. In terms of biological role, catalyzes the rearrangement of 1-deoxy-D-xylulose 5-phosphate (DXP) to produce the thiazole phosphate moiety of thiamine. Sulfur is provided by the thiocarboxylate moiety of the carrier protein ThiS. In vitro, sulfur can be provided by H(2)S. The polypeptide is Thiazole synthase (Chlorobium phaeobacteroides (strain DSM 266 / SMG 266 / 2430)).